Reading from the N-terminus, the 466-residue chain is Asparagine--tRNA ligase (466 aa).

This sequence belongs to the class-II aminoacyl-tRNA synthetase family. As to quaternary structure, homodimer.

The protein localises to the cytoplasm. It carries out the reaction tRNA(Asn) + L-asparagine + ATP = L-asparaginyl-tRNA(Asn) + AMP + diphosphate + H(+). This chain is Asparagine--tRNA ligase, found in Shewanella denitrificans (strain OS217 / ATCC BAA-1090 / DSM 15013).